Reading from the N-terminus, the 57-residue chain is Large ribosomal subunit protein bL32 (57 aa).

The tract at residues 1–23 (MAVPKKRTSKTRTNRRRAQKKAR) is disordered.

Belongs to the bacterial ribosomal protein bL32 family.

This is Large ribosomal subunit protein bL32 from Natranaerobius thermophilus (strain ATCC BAA-1301 / DSM 18059 / JW/NM-WN-LF).